A 108-amino-acid polypeptide reads, in one-letter code: UPF0060 membrane protein BLi00854/BL03049 (108 aa).

4 consecutive transmembrane segments (helical) span residues 3–23 (IAIGLFLLAGLAEIAGGYLVW), 31–51 (PLWYGLAGGLTLIIYGVIPAF), 60–80 (VYAAYGGVFIILAVLWGWLVD), and 86–106 (LYDWAGAVICLAGVSVMLWAP).

This sequence belongs to the UPF0060 family.

It localises to the cell membrane. The chain is UPF0060 membrane protein BLi00854/BL03049 from Bacillus licheniformis (strain ATCC 14580 / DSM 13 / JCM 2505 / CCUG 7422 / NBRC 12200 / NCIMB 9375 / NCTC 10341 / NRRL NRS-1264 / Gibson 46).